Reading from the N-terminus, the 586-residue chain is Laccase-9 (586 aa).

The N-terminal stretch at methionine 1–alanine 25 is a signal peptide. 2 consecutive Plastocyanin-like domains span residues histidine 33–glycine 149 and lysine 159–alanine 307. N-linked (GlcNAc...) asparagine glycosylation is found at asparagine 52, asparagine 74, and asparagine 79. The Cu cation site is built by histidine 83 and histidine 85. An N-linked (GlcNAc...) asparagine glycan is attached at asparagine 111. Positions 128 and 130 each coordinate Cu cation. Residues asparagine 236, asparagine 333, asparagine 385, asparagine 403, and asparagine 451 are each glycosylated (N-linked (GlcNAc...) asparagine). Residues aspartate 411 to proline 552 form the Plastocyanin-like 3 domain. Residues histidine 469, histidine 472, histidine 474, histidine 531, cysteine 532, histidine 533, and histidine 537 each coordinate Cu cation.

The protein belongs to the multicopper oxidase family. The cofactor is Cu cation. In terms of tissue distribution, predominantly expressed in roots.

The protein localises to the secreted. It localises to the extracellular space. Its subcellular location is the apoplast. The enzyme catalyses 4 hydroquinone + O2 = 4 benzosemiquinone + 2 H2O. Functionally, lignin degradation and detoxification of lignin-derived products. The chain is Laccase-9 (LAC9) from Arabidopsis thaliana (Mouse-ear cress).